A 792-amino-acid polypeptide reads, in one-letter code: MEPEINCSEFCDSFPGQELDRRPLHDLCKTTITDSQHGSADISPLSPALLGVIWTFLSCGLLLVLFFLAFTIRCRKNRIVKMSSPNLNIVTLLGSCLTYSSAYLFGIQDALVGSSVEALIQTRLSLLCIGTTLVFGPILGKSWRLYKVFTQRVPDKRVIIKDLQLLGLVAALVVADVILLVTWVLTDPIQCLQILGVSMKVTGRDVSCSLTNTHFCASRYSDVWIALVLGCKGLLLLYGAYLAGLTNHVSSPPVNQSLTIMVGVNLLLLTAGLLFVVTRYLHSWPNLVFGLTSGGIFVCTTTVNCCVFLPQLRQRKAFEGENQTIRHMAKYFSTPSKTFRSKFDEDQSCHLRDEXSCMERLLTEKNAVIESLQEQVSNAKEKLVKLMSAECALDSPEWAVPAAASAGGPAECXATSEKESGAAAEDSLPASAASQHMQGPGASRRDXSPSPDQKYDMPLKQFCDHLDMGCSQKPKAEQSEGPERGNQEPMAPGQSLMTDGVACEPHRPRQNSEVLPERLPRVSSVVREKLQEVLQELDLGTEAPLSPLPCPQQPWKSNTSGSPQKLSPSKLGFSPYVVRRRRAAQRARSRIPGSVGLKMGHQANNTVSGSQNGLIVQNRDSPRLDHHNARSKEPRSSSVKPSPISAPHQRRGSLEGSKQCETEPQEARGYSVAFPRQPSASAPAQSSTAPCLSSXPALPRQRQPLPLLSPGCPSLSSGCYNLDSESSSSDEFFCRCHRPYCEICFQSSLDSNDSDTSDSDLEQTSGLASWEKLLARSKPVVNFKDDLKPTLV.

Residues 1-49 (MEPEINCSEFCDSFPGQELDRRPLHDLCKTTITDSQHGSADISPLSPAL) lie on the Extracellular side of the membrane. A glycan (N-linked (GlcNAc...) asparagine) is linked at N6. A helical membrane pass occupies residues 50 to 70 (LGVIWTFLSCGLLLVLFFLAF). Over 71-86 (TIRCRKNRIVKMSSPN) the chain is Cytoplasmic. Residues 87 to 107 (LNIVTLLGSCLTYSSAYLFGI) form a helical membrane-spanning segment. Residues 108–118 (QDALVGSSVEA) lie on the Extracellular side of the membrane. A helical transmembrane segment spans residues 119 to 139 (LIQTRLSLLCIGTTLVFGPIL). Over 140 to 164 (GKSWRLYKVFTQRVPDKRVIIKDLQ) the chain is Cytoplasmic. The chain crosses the membrane as a helical span at residues 165–185 (LLGLVAALVVADVILLVTWVL). At 186-222 (TDPIQCLQILGVSMKVTGRDVSCSLTNTHFCASRYSD) the chain is on the extracellular side. The helical transmembrane segment at 223–243 (VWIALVLGCKGLLLLYGAYLA) threads the bilayer. Residues 244-257 (GLTNHVSSPPVNQS) lie on the Cytoplasmic side of the membrane. The helical transmembrane segment at 258–278 (LTIMVGVNLLLLTAGLLFVVT) threads the bilayer. At 279 to 287 (RYLHSWPNL) the chain is on the extracellular side. The helical transmembrane segment at 288-308 (VFGLTSGGIFVCTTTVNCCVF) threads the bilayer. Over 309-792 (LPQLRQRKAF…FKDDLKPTLV (484 aa)) the chain is Cytoplasmic. A coiled-coil region spans residues 354–390 (EXSCMERLLTEKNAVIESLQEQVSNAKEKLVKLMSAE). 3 disordered regions span residues 407-457 (GGPA…KYDM), 469-516 (GCSQ…EVLP), and 538-704 (DLGT…QRQP). The span at 422 to 434 (AAAEDSLPASAAS) shows a compositional bias: low complexity. 2 stretches are compositionally biased toward basic and acidic residues: residues 443–457 (SRRD…KYDM) and 474–486 (PKAE…ERGN). Polar residues predominate over residues 554–567 (PWKSNTSGSPQKLS). Residues 578–589 (VRRRRAAQRARS) show a composition bias toward basic residues. Over residues 602–619 (QANNTVSGSQNGLIVQNR) the composition is skewed to polar residues. Basic and acidic residues predominate over residues 620–635 (DSPRLDHHNARSKEPR). Residues 675–704 (PRQPSASAPAQSSTAPCLSSXPALPRQRQP) show a composition bias toward low complexity.

The protein belongs to the G-protein coupled receptor 3 family. GABA-B receptor subfamily. As to expression, widely expressed throughout the brain and is particularly dense in the olfactory tubercles, islands of Calleja, nucleus accumbens, piriform cortex and all fields of the hippocampus.

Its subcellular location is the cell membrane. Its function is as follows. Orphan G-protein coupled receptor involved in the regulation of hair cell orientation in mechanosensory organs of the inner ear. It is required to trigger a 180 degree reversal in hair cell orientation, creating a virtual line of polarity reversal (LPR) across which stereociliary bundles are arranged in opposite orientations. This chain is Probable G-protein coupled receptor 156 (Gpr156), found in Rattus norvegicus (Rat).